The sequence spans 1955 residues: MFRQFYLWTCLASGIILGSLFEICLGQYDDDCKLARGGPPATIVAIDEESRNGTILVDNMLIKGTAGGPDPTIELSLKDNVDYWVLMDPVKQMLFLNSTGRVLDRDPPMNIHSIVVQVQCINKKVGTIIYHEVRIVVRDRNDNSPTFKHESYYATVNELTPVGTTIFTGFSGDNGATDIDDGPNGQIEYVIQYNPDDPTSNDTFEIPLMLTGNIVLRKRLNYEDKTRYFVIIQANDRAQNLNERRTTTTTLTVDVLDGDDLGPMFLPCVLVPNTRDCRPLTYQAAIPELRTPEELNPIIVTPPIQAIDQDRNIQPPSDRPGILYSILVGTPEDYPRFFHMHPRTAELSLLEPVNRDFHQKFDLVIKAEQDNGHPLPAFAGLHIEILDENNQSPYFTMPSYQGYILESAPVGATISDSLNLTSPLRIVALDKDIEDTKDPELHLFLNDYTSVFTVTQTGITRYLTLLQPVDREEQQTYTFSITAFDGVQESEPVIVNIQVMDANDNTPTFPEISYDVYVYTDMRPGDSVIQLTAVDADEGSNGEITYEILVGAQGDFIINKTTGLITIAPGVEMIVGRTYALTVQAADNAPPAERRNSICTVYIEVLPPNNQSPPRFPQLMYSLEISEAMRVGAVLLNLQATDREGDSITYAIENGDPQRVFNLSETTGILTLGKALDRESTDRYILIITASDGRPDGTSTATVNIVVTDVNDNAPVFDPYLPRNLSVVEEEANAFVGQVKATDPDAGINGQVHYSLGNFNNLFRITSNGSIYTAVKLNREVRDYYELVVVATDGAVHPRHSTLTLAIKVLDIDDNSPVFTNSTYTVLVEENLPAGTTILQIEAKDVDLGANVSYRIRSPEVKHFFALHPFTGELSLLRSLDYEAFPDQEASITFLVEAFDIYGTMPPGIATVTVIVKDMNDYPPVFSKRIYKGMVAPDAVKGTPITTVYAEDADPPGLPASRVRYRVDDVQFPYPASIFEVEEDSGRVITRVNLNEEPTTIFKLVVVAFDDGEPVMSSSATVKILVLHPGEIPRFTQEEYRPPPVSELATKGTMVGVISAAAINQSIVYSIVSGNEEDTFGINNITGVIYVNGPLDYETRTSYVLRVQADSLEVVLANLRVPSKSNTAKVYIEIQDENNHPPVFQKKFYIGGVSEDARMFTSVLRVKATDKDTGNYSVMAYRLIIPPIKEGKEGFVVETYTGLIKTAMLFHNMRRSYFKFQVIATDDYGKGLSGKADVLVSVVNQLDMQVIVSNVPPTLVEKKIEDLTEILDRYVQEQIPGAKVVVESIGARRHGDAFSLEDYTKCDLTVYAIDPQTNRAIDRNELFKFLDGKLLDINKDFQPYYGEGGRILEIRTPEAVTSIKKRGESLGYTEGALLALAFIIILCCIPAILVVLVSYRQFKVRQAECTKTARIQAALPAAKPAVPAPAPVAAPPPPPPPPPGAHLYEELGDSSILFLLYHFQQSRGNNSVSEDRKHQQVVMPFSSNTIEAHKSAHVDGSLKSNKLKSARKFTFLSDEDDLSAHNPLYKENISQVSTNSDISQRTDFVDPFSPKIQAKSKSLRGPREKIQRLWSQSVSLPRRLMRKVPNRPEIIDLQQWQGTRQKAENENTGICTNKRGSSNPLLTTEEANLTEKEEIRQGETLMIEGTEQLKSLSSDSSFCFPRPHFSFSTLPTVSRTVELKSEPNVISSPAECSLELSPSRPCVLHSSLSRRETPICMLPIETERNIFENFAHPPNISPSACPLPPPPPISPPSPPPAPAPLAPPPDISPFSLFCPPPSPPSIPLPLPPPTFFPLSVSTSGPPTPPLLPPFPTPLPPPPPSIPCPPPPSASFLSTECVCITGVKCTTNLMPAEKIKSSMTQLSTTTVCKTDPQREPKGILRHVKNLAELEKSVANMYSQIEKNYLRTNVSELQTMCPSEVTNMEITSEQNKGSLNNIVEGTEKQSHSQSTSL.

The N-terminal stretch at 1–26 (MFRQFYLWTCLASGIILGSLFEICLG) is a signal peptide. Residues 27–1376 (QYDDDCKLAR…GESLGYTEGA (1350 aa)) lie on the Extracellular side of the membrane. Cysteines 32 and 120 form a disulfide. 11 consecutive Cadherin domains span residues 40 to 147 (PATI…SPTF), 148 to 265 (KHES…GPMF), 278 to 395 (RPLT…SPYF), 396 to 509 (TMPS…TPTF), 510 to 616 (PEIS…PPRF), 617 to 717 (PQLM…APVF), 719 to 819 (PYLP…SPVF), 820 to 926 (TNST…PPVF), 927 to 1035 (SKRI…IPRF), 1037 to 1144 (QEEY…PPVF), and 1145 to 1259 (QKKF…PPTL). Residues asparagine 52, asparagine 97, and asparagine 201 are each glycosylated (N-linked (GlcNAc...) asparagine). N-linked (GlcNAc...) asparagine glycosylation is found at asparagine 419, asparagine 559, asparagine 662, asparagine 724, asparagine 768, asparagine 821, and asparagine 851. 3 N-linked (GlcNAc...) asparagine glycosylation sites follow: asparagine 1064, asparagine 1084, and asparagine 1175. The helical transmembrane segment at 1377 to 1397 (LLALAFIIILCCIPAILVVLV) threads the bilayer. Topologically, residues 1398–1955 (SYRQFKVRQA…KQSHSQSTSL (558 aa)) are cytoplasmic. The segment covering 1426–1444 (VPAPAPVAAPPPPPPPPPG) has biased composition (pro residues). 4 disordered regions span residues 1426–1446 (VPAPAPVAAPPPPPPPPPGAH), 1601–1623 (QGTRQKAENENTGICTNKRGSSN), 1745–1766 (CPLPPPPPISPPSPPPAPAPLA), and 1928–1955 (ITSEQNKGSLNNIVEGTEKQSHSQSTSL). Residues 1928-1941 (ITSEQNKGSLNNIV) are compositionally biased toward polar residues.

In terms of assembly, antiparallel heterodimer with CDH23. Found in a complex with TMIE and LHFPL5. Interacts with LHFPL5/TMHS; this interaction is required for efficient localization to hair bundles. Interacts with MYO7A. Interacts with USH1G; this interaction may recruit USH1G to the plasma membrane. Interacts with TOMT. Isoforms CD1 and CD3 interact with TMC1 (via N-terminus) and TMC2 (via N-terminus). Expressed in brain, lung, kidney, spleen and testis. Found also in the inner and outer synaptic layers, and the nerve fiber layer in adult and fetal retinas. Found in the supporting cells, outer sulcus cells and spiral ganglion of fetal cochlea. Expressed in cytotoxic tumor-derived T- and NK-cell lines as well as biopsies of nasal NK/T-cell lymphomas. Not detected in normal or in vitro activated peripheral blood cells, CD4 or CD8 lymphocytes or NK cells. Isoform 3 is expressed in brain, heart, cerebellum and kidney. CD1 isoforms, such as isoform 1, have a limited pattern of expression and is detected in testis, retina and cochlea. CD2 isoforms, such as isoforms 4 and 5, are expressed in heart, kidney, thymus, spleen, testis, retina and cochlea. CD3 isoforms, such as isoform 6, are widely expressed.

It is found in the cell membrane. Its subcellular location is the secreted. Its function is as follows. Calcium-dependent cell-adhesion protein. Essential for maintenance of normal retinal and cochlear function. This Homo sapiens (Human) protein is Protocadherin-15 (PCDH15).